Here is a 346-residue protein sequence, read N- to C-terminus: Large ribosomal subunit protein uL10 (346 aa).

The disordered stretch occupies residues 307–346 (AAAVAKEPEKKEEVKEEEEEEEEEDHSEEDGMAGLGSLFG). The segment covering 321–337 (KEEEEEEEEEDHSEEDG) has biased composition (acidic residues).

This sequence belongs to the universal ribosomal protein uL10 family. In terms of assembly, part of the 50S ribosomal subunit. Forms part of the ribosomal stalk which helps the ribosome interact with GTP-bound translation factors. Forms both a pentameric L10(L12)2(L12)2 and heptameric L10(L12)2(L12)2(L12)2 complex, where L10 forms an elongated spine to which the L12 dimers bind in a sequential fashion. The proportion of heptameric complexes increases during cell growth.

In terms of biological role, forms part of the ribosomal stalk, playing a central role in the interaction of the ribosome with GTP-bound translation factors. This Methanosarcina barkeri (strain Fusaro / DSM 804) protein is Large ribosomal subunit protein uL10.